Reading from the N-terminus, the 180-residue chain is Ribulose bisphosphate carboxylase small subunit, chloroplastic (180 aa).

Residues 1–56 (MALISSAAVTTVNRASSAQANLVAPFTGLKSSAGFPVTKKTNNDITSIASNGGRVN) constitute a chloroplast transit peptide.

Belongs to the RuBisCO small chain family. As to quaternary structure, heterohexadecamer of 8 large and 8 small subunits.

Its subcellular location is the plastid. It is found in the chloroplast. In terms of biological role, ruBisCO catalyzes two reactions: the carboxylation of D-ribulose 1,5-bisphosphate, the primary event in carbon dioxide fixation, as well as the oxidative fragmentation of the pentose substrate. Both reactions occur simultaneously and in competition at the same active site. Although the small subunit is not catalytic it is essential for maximal activity. The protein is Ribulose bisphosphate carboxylase small subunit, chloroplastic of Medicago sativa (Alfalfa).